A 330-amino-acid polypeptide reads, in one-letter code: Membrane progestin receptor gamma (330 aa).

Residues 1-51 (MLSLKLPRLFRIDQVPQVFHEQGILFGYRHPQSSATACILSLFQMTNETLN) are Cytoplasmic-facing. The helical transmembrane segment at 52–72 (IWTHLLPFWFFVWRFMTALYV) threads the bilayer. Residues 73–81 (TDIQNDSYS) lie on the Extracellular side of the membrane. The chain crosses the membrane as a helical span at residues 82–101 (WPMLVYMCTSCVYPLASSCA). The Cytoplasmic portion of the chain corresponds to 102 to 113 (HTFSSMSKNARH). A helical transmembrane segment spans residues 114-134 (ICYFLDYGAVNLFSLGSAIAY). Residues 135–141 (SAYTFPD) lie on the Extracellular side of the membrane. A helical membrane pass occupies residues 142 to 162 (ALVCSTFHECYVALAVLNTIL). The Cytoplasmic segment spans residues 163–186 (STGLSCYSRFLELQKPRLCKLLRV). The chain crosses the membrane as a helical span at residues 187–207 (LAFAYPYTWDSLPIFYRLFLF). Residues 208-253 (PGESSRNEAMLYHQKHMGMTLLASFFYSAHLPERLAPGRFDYIGHS) lie on the Extracellular side of the membrane. The helical transmembrane segment at 254-274 (HQLFHVCVILATHLQMEAILL) threads the bilayer. At 275-294 (DKTLRREWLLATSRPFSFPQ) the chain is on the cytoplasmic side. A helical membrane pass occupies residues 295-315 (IAAAMLLCIIFSLSNIIYFSA). Residues 316-330 (ALYRIPEPELHEKET) lie on the Extracellular side of the membrane.

It belongs to the ADIPOR family.

Its subcellular location is the cell membrane. Its function is as follows. Plasma membrane progesterone (P4) receptor coupled to G proteins. Seems to act through a G(i) mediated pathway. May be involved in oocyte maturation. The polypeptide is Membrane progestin receptor gamma (Mus musculus (Mouse)).